We begin with the raw amino-acid sequence, 435 residues long: Adenylosuccinate synthetase (435 aa).

Residues 20–26 and 48–50 contribute to the GTP site; these read GDEGKGK and GHT. Catalysis depends on aspartate 21, which acts as the Proton acceptor. Mg(2+) contacts are provided by aspartate 21 and glycine 48. IMP-binding positions include 21-24, 46-49, threonine 134, arginine 148, glutamine 229, threonine 244, and arginine 308; these read DEGK and NAGH. The active-site Proton donor is the histidine 49. Position 304-310 (304-310) interacts with substrate; the sequence is TTTGRPR. GTP contacts are provided by residues arginine 310, 336–338, and 422–424; these read KVD and SMG.

This sequence belongs to the adenylosuccinate synthetase family. Homodimer. It depends on Mg(2+) as a cofactor.

It is found in the cytoplasm. The enzyme catalyses IMP + L-aspartate + GTP = N(6)-(1,2-dicarboxyethyl)-AMP + GDP + phosphate + 2 H(+). It functions in the pathway purine metabolism; AMP biosynthesis via de novo pathway; AMP from IMP: step 1/2. In terms of biological role, plays an important role in the de novo pathway of purine nucleotide biosynthesis. Catalyzes the first committed step in the biosynthesis of AMP from IMP. This Thermoplasma acidophilum (strain ATCC 25905 / DSM 1728 / JCM 9062 / NBRC 15155 / AMRC-C165) protein is Adenylosuccinate synthetase.